The chain runs to 836 residues: Spliceosome associated factor 3, U4/U6 recycling protein (836 aa).

5 HAT repeats span residues 127-163 (EDFKFCRDVCSKALENLGTRYDSGGHIWLIFLEYEMS), 296-329 (KLPQVAVKVYSRALRHCPYSFVLHQQALLAFERD), 331-367 (RPNEEIDALWERARSNVINSAEEGRSLYRTYAFLLRR), 418-451 (KNMDKCRNIWNDILASGFGRFAGKWIEAVRLERQ), and 453-486 (GDKENARKYLNKALNSVSDNINEIYMYYVQFERE). The segment at 507 to 585 (RAIRPQKKVS…APGSFAVQKA (79 aa)) is disordered. Over residues 540-550 (IVKKVKGDDGG) the composition is skewed to basic and acidic residues. A compositionally biased stretch (low complexity) spans 558–579 (SNAKSSSAVSSSNASSTPAPGS). RRM domains lie at 593 to 668 (RTIF…ANDP) and 683 to 760 (SKVF…LSNP). Disordered regions lie at residues 757–786 (LSNPPVKKDKSHGKPAAIGASLEEDGPRKG) and 811–830 (AMDVSEGTSTSQPLSNDQFR). Positions 816-827 (EGTSTSQPLSND) are enriched in polar residues.

Forms a complex composed of sart-3, terminal uridylyltransferase usip-1 and U6 snRNA; complex formation is mediated by usip-1 and sart-3 binding to U6 snRNA. Associates with U4 and U6 snRNP complexes, probably by interacting with U4 and U6 snRNAs. In terms of tissue distribution, ubiquitously expressed.

The protein resides in the nucleus. It localises to the nucleoplasm. U6 snRNP-binding protein that functions as a recycling factor of the splicing machinery. Promotes the initial reassembly of U4 and U6 snRNPs following their ejection from the spliceosome during its maturation. The polypeptide is Spliceosome associated factor 3, U4/U6 recycling protein (Caenorhabditis elegans).